The primary structure comprises 254 residues: Probable transcriptional regulatory protein Cyan7425_4347 (254 aa).

It belongs to the TACO1 family.

It is found in the cytoplasm. The protein is Probable transcriptional regulatory protein Cyan7425_4347 of Cyanothece sp. (strain PCC 7425 / ATCC 29141).